We begin with the raw amino-acid sequence, 101 residues long: uncharacterized protein (101 aa).

Positions 1–11 (MSDEGYRELVE) are enriched in basic and acidic residues. The tract at residues 1–26 (MSDEGYRELVESKSAPTTPGPWSPDR) is disordered.

This is an uncharacterized protein from Torque teno canis virus (isolate Cf-TTV10).